We begin with the raw amino-acid sequence, 252 residues long: 2-succinyl-6-hydroxy-2,4-cyclohexadiene-1-carboxylate synthase (252 aa).

It belongs to the AB hydrolase superfamily. MenH family. In terms of assembly, monomer.

It catalyses the reaction 5-enolpyruvoyl-6-hydroxy-2-succinyl-cyclohex-3-ene-1-carboxylate = (1R,6R)-6-hydroxy-2-succinyl-cyclohexa-2,4-diene-1-carboxylate + pyruvate. Its pathway is quinol/quinone metabolism; 1,4-dihydroxy-2-naphthoate biosynthesis; 1,4-dihydroxy-2-naphthoate from chorismate: step 3/7. The protein operates within quinol/quinone metabolism; menaquinone biosynthesis. In terms of biological role, catalyzes a proton abstraction reaction that results in 2,5-elimination of pyruvate from 2-succinyl-5-enolpyruvyl-6-hydroxy-3-cyclohexene-1-carboxylate (SEPHCHC) and the formation of 2-succinyl-6-hydroxy-2,4-cyclohexadiene-1-carboxylate (SHCHC). In Escherichia coli O7:K1 (strain IAI39 / ExPEC), this protein is 2-succinyl-6-hydroxy-2,4-cyclohexadiene-1-carboxylate synthase.